The following is a 535-amino-acid chain: Dipeptide-binding protein (535 aa).

The N-terminal stretch at 1–28 is a signal peptide; that stretch reads MRISLKKSGMLKLGLSLVAMTVAASVQA. Cys34 and Cys262 are oxidised to a cystine. Residues 48-50, 383-385, and 433-436 contribute to the glycyl-L-leucine site; these read TSG, RPY, and WTGD. Cys450 and Cys463 are disulfide-bonded.

The protein belongs to the bacterial solute-binding protein 5 family. The complex is composed of two ATP-binding proteins (DppD and DppF), two transmembrane proteins (DppB and DppC) and a solute-binding protein (DppA).

The protein resides in the periplasm. Heme binding is inhibited by dipeptide. In terms of biological role, part of the ABC transporter DppABCDF involved in dipeptide transport. Binds dipeptides and accepts a wide range of side chains, including small neutral, bulky hydrophobic, and positively and negatively charged groups. Tripeptides are poor substrates. DppA alone controls the specificity of the Dpp transporter. In addition, plays a role in chemotaxis toward peptides via interaction with the chemotaxis protein Tap. Binds heme. When a foreign outer membrane heme receptor is expressed in E.coli, DppABCDF can also transport heme and its precursor, 5-aminolevulinic acid (ALA), from the periplasm into the cytoplasm. In Escherichia coli (strain K12), this protein is Dipeptide-binding protein.